An 861-amino-acid chain; its full sequence is Integrator complex subunit 6-like (861 aa).

The 225-residue stretch at 3-227 (ILLFLIDTSA…QCLESLVQKV (225 aa)) folds into the VWFA domain. Ser617 carries the post-translational modification Phosphoserine.

The protein is Integrator complex subunit 6-like (Ints6l) of Mus musculus (Mouse).